The chain runs to 396 residues: Probable mannan endo-1,4-beta-mannosidase A-2 (396 aa).

A signal peptide spans 1–21; it reads MKVPRLLLALGGLASIHIASA. Tryptophan 99 provides a ligand contact to substrate. An N-linked (GlcNAc...) asparagine glycan is attached at asparagine 120. Position 212 (asparagine 212) interacts with substrate. The Proton donor role is filled by glutamate 213. Asparagine 270 carries an N-linked (GlcNAc...) asparagine glycan. Tyrosine 288 serves as a coordination point for substrate. The Nucleophile role is filled by glutamate 321. Tryptophan 351 contributes to the substrate binding site.

This sequence belongs to the glycosyl hydrolase 5 (cellulase A) family.

The protein localises to the secreted. It catalyses the reaction Random hydrolysis of (1-&gt;4)-beta-D-mannosidic linkages in mannans, galactomannans and glucomannans.. In terms of biological role, endo-1,4-mannanase, a crucial enzyme for depolymerization of seed galactomannans and wood galactoglucomannans. In Aspergillus terreus (strain NIH 2624 / FGSC A1156), this protein is Probable mannan endo-1,4-beta-mannosidase A-2 (manA-2).